Consider the following 501-residue polypeptide: MNGTSTTGNGFTNGTNYPVPKLELQPETTSTSPTRAQTHPLLPSVSDDELHDLICVGFGPASLAIAIALHDRLLETAHSPDITTVPKICFLEKQSNFAWHSGMLLPGSKMQISFIKDLATIRNPRSEFTFLNYLQVHDRLLDFANLGTFLPARIEFEDYMKWCASKFANLVRYRTEVLDVTPSEVDPVTGKVHFFTVRSKVLETGEVTTRKARHVVVAIGGKPNIPAEFPTNSRIIHSSAYCTTLPSLLNNTLKEYSIAVAGSGQSAAEIFHDLQKRYPNAKTSLIMRDSALRPSDDSPFPSVNELFNPERVDQFFNQSEKERQHFLERHRSTNYSVVRPELIEQIYADMYIQKIQYPDETQWQHRIFSSCLISKVDSDKSEKLNLSLQHCHSENTTMNGTHNEEMNADALILATGYVRNAHESILASIEPLLAQKHMGWKVQRNYRLELDKNQVDVDAGIWLQGCNESTHGLSDSLLSILAVRGAEIVQAIFGAQISNGN.

The span at 1–16 (MNGTSTTGNGFTNGTN) shows a compositional bias: low complexity. The disordered stretch occupies residues 1–40 (MNGTSTTGNGFTNGTNYPVPKLELQPETTSTSPTRAQTHP). The segment covering 26–37 (PETTSTSPTRAQ) has biased composition (polar residues). FAD-binding positions include 92–100 (EKQSNFAWH) and Q111. K116 contributes to the substrate binding site. V177 is a binding site for FAD. 263–266 (SGQS) is an NADP(+) binding site. Residues 304–307 (NELF) and N334 each bind substrate. Residue 334–336 (NYS) coordinates NADP(+). Residue 476–478 (SLL) coordinates FAD. Position 479 (S479) interacts with substrate.

Belongs to the lysine N(6)-hydroxylase/L-ornithine N(5)-oxygenase family. In terms of assembly, homotetramer. The cofactor is FAD.

It catalyses the reaction L-ornithine + NADPH + O2 = N(5)-hydroxy-L-ornithine + NADP(+) + H2O. The catalysed reaction is L-ornithine + NADH + O2 = N(5)-hydroxy-L-ornithine + NAD(+) + H2O. It participates in siderophore biosynthesis. Its function is as follows. L-ornithine N(5)-monooxygenase; part of the siderophore biosynthetic pathway. Arthroderma benhamiae produces 2 types of extracellular siderophores, ferrichrome C and ferricrocin. The biosynthesis of these siderophores depends on the hydroxylation of ornithine to N(5)-hydroxyornithine, catalyzed by the monooxygenase sidA. The structure of ferricrocin differs from ferrichrome C only by a serine for alanine substitution and the assembly of both siderophores is suggested to be performed by the nonribosomal peptide synthase (NRPS) sidC. The sequence is that of L-ornithine N(5)-monooxygenase from Arthroderma benhamiae (strain ATCC MYA-4681 / CBS 112371) (Trichophyton mentagrophytes).